Reading from the N-terminus, the 396-residue chain is Small ribosomal subunit protein uS9m (396 aa).

A disordered region spans residues Pro374 to Arg396.

The protein belongs to the universal ribosomal protein uS9 family. As to quaternary structure, component of the mitochondrial ribosome small subunit (28S) which comprises a 12S rRNA and about 30 distinct proteins.

The protein localises to the mitochondrion. The chain is Small ribosomal subunit protein uS9m (MRPS9) from Bos taurus (Bovine).